A 257-amino-acid chain; its full sequence is 2,3,4,5-tetrahydropyridine-2,6-dicarboxylate N-acetyltransferase (257 aa).

Belongs to the transferase hexapeptide repeat family. DapH subfamily.

The catalysed reaction is (S)-2,3,4,5-tetrahydrodipicolinate + acetyl-CoA + H2O = L-2-acetamido-6-oxoheptanedioate + CoA. The protein operates within amino-acid biosynthesis; L-lysine biosynthesis via DAP pathway; LL-2,6-diaminopimelate from (S)-tetrahydrodipicolinate (acetylase route): step 1/3. Catalyzes the transfer of an acetyl group from acetyl-CoA to tetrahydrodipicolinate. In Lactococcus lactis subsp. cremoris (strain SK11), this protein is 2,3,4,5-tetrahydropyridine-2,6-dicarboxylate N-acetyltransferase.